Here is a 70-residue protein sequence, read N- to C-terminus: NAD(P)H-quinone oxidoreductase subunit L (70 aa).

2 helical membrane-spanning segments follow: residues 2-22 (IVALLYLILAGAYLLVIPIAV) and 39-59 (LLMYFLVFFFFPGLLVLSPFA).

This sequence belongs to the complex I NdhL subunit family. As to quaternary structure, NDH-1 can be composed of about 15 different subunits; different subcomplexes with different compositions have been identified which probably have different functions.

The protein localises to the cellular thylakoid membrane. The enzyme catalyses a plastoquinone + NADH + (n+1) H(+)(in) = a plastoquinol + NAD(+) + n H(+)(out). The catalysed reaction is a plastoquinone + NADPH + (n+1) H(+)(in) = a plastoquinol + NADP(+) + n H(+)(out). NDH-1 shuttles electrons from an unknown electron donor, via FMN and iron-sulfur (Fe-S) centers, to quinones in the respiratory and/or the photosynthetic chain. The immediate electron acceptor for the enzyme in this species is believed to be plastoquinone. Couples the redox reaction to proton translocation, and thus conserves the redox energy in a proton gradient. Cyanobacterial NDH-1 also plays a role in inorganic carbon-concentration. The protein is NAD(P)H-quinone oxidoreductase subunit L of Nostoc punctiforme (strain ATCC 29133 / PCC 73102).